The primary structure comprises 178 residues: Large ribosomal subunit protein uL6 (178 aa).

The segment covering 155 to 169 has biased composition (basic and acidic residues); sequence PYKGKGIKYDNEQIR. The disordered stretch occupies residues 155 to 178; sequence PYKGKGIKYDNEQIRRKAGKSGGK.

This sequence belongs to the universal ribosomal protein uL6 family. In terms of assembly, part of the 50S ribosomal subunit.

Functionally, this protein binds to the 23S rRNA, and is important in its secondary structure. It is located near the subunit interface in the base of the L7/L12 stalk, and near the tRNA binding site of the peptidyltransferase center. This chain is Large ribosomal subunit protein uL6, found in Nitratidesulfovibrio vulgaris (strain DSM 19637 / Miyazaki F) (Desulfovibrio vulgaris).